The chain runs to 337 residues: Aspartate carbamoyltransferase catalytic subunit (337 aa).

Residues Arg-54 and Thr-55 each contribute to the carbamoyl phosphate site. Position 82 (Lys-82) interacts with L-aspartate. Positions 104, 134, and 137 each coordinate carbamoyl phosphate. 2 residues coordinate L-aspartate: Arg-177 and Arg-232. The carbamoyl phosphate site is built by Gly-277 and Pro-278.

Belongs to the aspartate/ornithine carbamoyltransferase superfamily. ATCase family. Heterododecamer (2C3:3R2) of six catalytic PyrB chains organized as two trimers (C3), and six regulatory PyrI chains organized as three dimers (R2).

It carries out the reaction carbamoyl phosphate + L-aspartate = N-carbamoyl-L-aspartate + phosphate + H(+). It functions in the pathway pyrimidine metabolism; UMP biosynthesis via de novo pathway; (S)-dihydroorotate from bicarbonate: step 2/3. Its function is as follows. Catalyzes the condensation of carbamoyl phosphate and aspartate to form carbamoyl aspartate and inorganic phosphate, the committed step in the de novo pyrimidine nucleotide biosynthesis pathway. The polypeptide is Aspartate carbamoyltransferase catalytic subunit (Arthrobacter sp. (strain FB24)).